Reading from the N-terminus, the 172-residue chain is B-box zinc finger protein 18 (172 aa).

Zn(2+) is bound by residues C5, C8, C28, H33, C56, C59, C79, and H84. The B box-type 1; atypical zinc-finger motif lies at 5–47; the sequence is CDACESAAAIVFCAADEAALCCSCDEKVHKCNKLASRHLRVGL. A B box-type 2; atypical zinc finger spans residues 56–96; the sequence is CDICENAPAFFYCEIDGSSLCLQCDMVVHVGGKRTHRRFLL. Residues 119–172 are disordered; it reads QKASSGRGQESNGNGDHDHNMIDLNSNPQRVHEPGSHNQEEGIDVNNANNHEHE. Residues 120–132 are compositionally biased toward polar residues; sequence KASSGRGQESNGN. Over residues 148-158 the composition is skewed to basic and acidic residues; the sequence is RVHEPGSHNQE.

Expressed in vasculature of leaves and petioles.

Its subcellular location is the nucleus. In terms of biological role, acts as a negative regulator of seedling photomorphogenesis. Acts as a negative regulator of blue light-mediated inhibition of hypocotyl elongation through increase of bioactive gibberellin levels. Acts as a repressor of thermotolerance by modulating expression of a set of heat shock-responsive genes. This Arabidopsis thaliana (Mouse-ear cress) protein is B-box zinc finger protein 18.